The following is a 490-amino-acid chain: E3 ubiquitin-protein ligase Hakai (490 aa).

The tract at residues 34 to 60 (QANKAKPAPRTQRTINRMPAKAPPGDE) is disordered. An RING-type zinc finger spans residues 108 to 148 (CDKCGLPIKIYGRMIPCKHVFCYDCAILHEKKGDKMCPGCS). Positions 147 to 205 (CSDPVQRIEQCTRGSLFMCSIVQGCKRTYLSQRDLQAHINHRHMRAGKPVTRASLENVH) are HYB domain. A C2H2-type zinc finger spans residues 163 to 189 (FMCSIVQGCKRTYLSQRDLQAHINHRH). Ser-200, Ser-284, and Ser-289 each carry phosphoserine. Residues 254–490 (QPHEDIRAPP…DQTRYRPYYQ (237 aa)) are disordered. 3 stretches are compositionally biased toward pro residues: residues 341-358 (APPPPPPPPISHPMPHPP), 371-388 (APPPPMTSAPPPITPPPG), and 398-422 (MNHPPPGPPPPQHGGPPVTAPPPHH). The span at 426 to 441 (NSLPQFTEDQGTLSPP) shows a compositional bias: polar residues. A compositionally biased stretch (pro residues) spans 456–477 (PRGPPPPPRLQGPPSQTPLPGP).

This sequence belongs to the Hakai family. Homodimer. Interacts with tyrosine-phosphorylated SRC substrates. Component of the WMM complex, a N6-methyltransferase complex composed of a catalytic subcomplex, named MAC, and of an associated subcomplex, named MACOM. The MAC subcomplex is composed of METTL3 and METTL14. The MACOM subcomplex is composed of WTAP, ZC3H13, CBLL1/HAKAI, VIRMA, and, in some cases of RBM15 (RBM15 or RBM15B). Also a component of a MACOM-like complex, named WTAP complex, composed of WTAP, ZC3H13, CBLL1, VIRMA, RBM15, BCLAF1 and THRAP3. In terms of processing, phosphorylated on tyrosine residues.

The protein resides in the nucleus speckle. The protein localises to the nucleus. Its subcellular location is the nucleoplasm. It is found in the cytoplasm. It catalyses the reaction S-ubiquitinyl-[E2 ubiquitin-conjugating enzyme]-L-cysteine + [acceptor protein]-L-lysine = [E2 ubiquitin-conjugating enzyme]-L-cysteine + N(6)-ubiquitinyl-[acceptor protein]-L-lysine.. It functions in the pathway protein modification; protein ubiquitination. In terms of biological role, E3 ubiquitin-protein ligase that mediates ubiquitination of several tyrosine-phosphorylated Src substrates, including CDH1, CTTN and DOK1. Targets CDH1 for endocytosis and degradation. Associated component of the WMM complex, a complex that mediates N6-methyladenosine (m6A) methylation of RNAs, a modification that plays a role in the efficiency of mRNA splicing and RNA processing. Its function in the WMM complex is unknown. This chain is E3 ubiquitin-protein ligase Hakai, found in Macaca fascicularis (Crab-eating macaque).